Reading from the N-terminus, the 328-residue chain is Fructose-1,6-bisphosphatase class 1 (328 aa).

The Mg(2+) site is built by E91, D110, L112, and D113. Residues 113-116 (DGSS), N205, and 257-259 (YLY) each bind substrate. E277 is a binding site for Mg(2+).

This sequence belongs to the FBPase class 1 family. Homotetramer. Mg(2+) serves as cofactor.

It is found in the cytoplasm. The enzyme catalyses beta-D-fructose 1,6-bisphosphate + H2O = beta-D-fructose 6-phosphate + phosphate. The protein operates within carbohydrate biosynthesis; gluconeogenesis. The sequence is that of Fructose-1,6-bisphosphatase class 1 from Azorhizobium caulinodans (strain ATCC 43989 / DSM 5975 / JCM 20966 / LMG 6465 / NBRC 14845 / NCIMB 13405 / ORS 571).